An 87-amino-acid chain; its full sequence is UPF0297 protein Sca_1229 (87 aa).

This sequence belongs to the UPF0297 family.

This is UPF0297 protein Sca_1229 from Staphylococcus carnosus (strain TM300).